Reading from the N-terminus, the 211-residue chain is 2,3-bisphosphoglycerate-dependent phosphoglycerate mutase (211 aa).

Residues 9–16, 22–23, arginine 61, 88–91, lysine 99, 115–116, and 159–160 contribute to the substrate site; these read RHGQSDWN, TG, ERDY, RR, and GN. Histidine 10 acts as the Tele-phosphohistidine intermediate in catalysis. Catalysis depends on glutamate 88, which acts as the Proton donor/acceptor.

This sequence belongs to the phosphoglycerate mutase family. BPG-dependent PGAM subfamily. As to quaternary structure, homodimer.

It catalyses the reaction (2R)-2-phosphoglycerate = (2R)-3-phosphoglycerate. It participates in carbohydrate degradation; glycolysis; pyruvate from D-glyceraldehyde 3-phosphate: step 3/5. Its function is as follows. Catalyzes the interconversion of 2-phosphoglycerate and 3-phosphoglycerate. In Allorhizobium ampelinum (strain ATCC BAA-846 / DSM 112012 / S4) (Agrobacterium vitis (strain S4)), this protein is 2,3-bisphosphoglycerate-dependent phosphoglycerate mutase.